Reading from the N-terminus, the 44-residue chain is U4-ctenitoxin-Co1a (44 aa).

4 disulfides stabilise this stretch: cysteine 2–cysteine 19, cysteine 9–cysteine 25, cysteine 18–cysteine 39, and cysteine 27–cysteine 37.

As to expression, expressed by the venom gland.

It localises to the secreted. Its function is as follows. Omega-agatoxins are antagonists of voltage-gated calcium channels (Cav). Toxic to mice by intracerebroventricular injection. This Ctenus ornatus (Brazilian spider) protein is U4-ctenitoxin-Co1a.